Consider the following 487-residue polypeptide: Malonate-semialdehyde dehydrogenase 2 (487 aa).

NAD(+) contacts are provided by phenylalanine 154, lysine 178, glutamate 181, arginine 182, and serine 231. The Nucleophile role is filled by cysteine 286. Glutamate 386 is an NAD(+) binding site.

The protein belongs to the aldehyde dehydrogenase family. IolA subfamily. In terms of assembly, homotetramer.

The enzyme catalyses 3-oxopropanoate + NAD(+) + CoA + H2O = hydrogencarbonate + acetyl-CoA + NADH + H(+). The catalysed reaction is 2-methyl-3-oxopropanoate + NAD(+) + CoA + H2O = propanoyl-CoA + hydrogencarbonate + NADH + H(+). The protein operates within polyol metabolism; myo-inositol degradation into acetyl-CoA; acetyl-CoA from myo-inositol: step 7/7. Its function is as follows. Catalyzes the oxidation of malonate semialdehyde (MSA) and methylmalonate semialdehyde (MMSA) into acetyl-CoA and propanoyl-CoA, respectively. Is involved in a myo-inositol catabolic pathway. Bicarbonate, and not CO2, is the end-product of the enzymatic reaction. This is Malonate-semialdehyde dehydrogenase 2 from Bacillus thuringiensis (strain Al Hakam).